A 431-amino-acid chain; its full sequence is Putative F-box/FBD/LRR-repeat protein At3g56780 (431 aa).

Residues 6-62 (CSCINELPDDLILKILSFVSTKHVVVTSLLSKKWKSLWTRVPILKYDVRDHTRFERF) enclose the F-box domain. 8 LRR repeats span residues 56 to 82 (HTRF…HVEL), 88 to 113 (NKDI…EIDA), 135 to 161 (LKGI…HIDH), 162 to 187 (SSLF…MVIR), 209 to 236 (LEGL…HVAR), 237 to 262 (MEDF…TLEE), 264 to 285 (TSDV…SIIT), and 357 to 382 (CSER…KLEH). Residues 391–423 (RWEPPSLVPECLLSSLEALEWKGYTGRYGDKDL) form the FBD domain.

The polypeptide is Putative F-box/FBD/LRR-repeat protein At3g56780 (Arabidopsis thaliana (Mouse-ear cress)).